We begin with the raw amino-acid sequence, 256 residues long: Distal membrane-arm assembly complex protein 2 (256 aa).

The residue at position 252 (S252) is a Phosphoserine.

The protein belongs to the ATP synthase subunit s family. As to quaternary structure, interacts with incompletely assembled mitochondrial NADH:ubiquinone oxidoreductase complex (complex I).

The protein localises to the mitochondrion. In terms of biological role, required for the assembly of the mitochondrial NADH:ubiquinone oxidoreductase complex (complex I). Involved in the assembly of the distal region of complex I. This chain is Distal membrane-arm assembly complex protein 2, found in Macaca fascicularis (Crab-eating macaque).